The following is a 197-amino-acid chain: Transcription factor FapR (197 aa).

The protein belongs to the FapR family.

Transcriptional factor involved in regulation of membrane lipid biosynthesis by repressing genes involved in fatty acid and phospholipid metabolism. The polypeptide is Transcription factor FapR (Bacillus mycoides (strain KBAB4) (Bacillus weihenstephanensis)).